We begin with the raw amino-acid sequence, 119 residues long: Venom allergen 2 (119 aa).

This sequence belongs to the ant venom allergen 2/4 family. In terms of assembly, homodimer; disulfide-linked. As to expression, expressed by the venom gland.

It is found in the secreted. The chain is Venom allergen 2 from Solenopsis richteri (Black imported fire ant).